We begin with the raw amino-acid sequence, 558 residues long: Mitochondrial nucleoid-associated protein 1 (558 aa).

The Extracellular segment spans residues 1–527 (MGAAEPRMEV…VQCNTTIKKS (527 aa)). Disordered stretches follow at residues 29–88 (KMRG…SWTA), 130–205 (LQRV…KLGT), and 222–269 (LSDR…KTQK). Residues 36 to 45 (SADQNVSQSK) are compositionally biased toward polar residues. Basic and acidic residues predominate over residues 51 to 81 (QKEKSPTRDLTRAKEKELEVDRPKRAVKAET). Composition is skewed to polar residues over residues 131–144 (QRVT…SDAT) and 187–197 (SSTQPHANPAT). Residues 528-548 (GVGGLTMLFAGYFILCCNWSF) form a helical membrane-spanning segment. Residues 549–558 (KHLKLQHWRK) are Cytoplasmic-facing.

It localises to the mitochondrion inner membrane. Its subcellular location is the mitochondrion matrix. The protein localises to the mitochondrion nucleoid. Functionally, critical regulator of mitochondrial DNA (mtDNA) abundance. Binds dsDNA throughout the mitochondrial genome without sequence specificity and controls mtDNA copy number by promoting its replication. Also plays important roles in mitochondrial metabolism and cell proliferation. The chain is Mitochondrial nucleoid-associated protein 1 from Mus musculus (Mouse).